The chain runs to 257 residues: Phosphonates import ATP-binding protein PhnC (257 aa).

The ABC transporter domain maps to 2 to 246 (IEFRNVSKVY…KFAEIYGDVA (245 aa)). 35–42 (GLSGAGKS) contributes to the ATP binding site.

This sequence belongs to the ABC transporter superfamily. Phosphonates importer (TC 3.A.1.9.1) family. As to quaternary structure, the complex is composed of two ATP-binding proteins (PhnC), two transmembrane proteins (PhnE) and a solute-binding protein (PhnD).

It localises to the cell membrane. It catalyses the reaction phosphonate(out) + ATP + H2O = phosphonate(in) + ADP + phosphate + H(+). Its function is as follows. Part of the ABC transporter complex PhnCDE involved in phosphonates import. Responsible for energy coupling to the transport system. The protein is Phosphonates import ATP-binding protein PhnC of Bacillus cereus (strain ATCC 14579 / DSM 31 / CCUG 7414 / JCM 2152 / NBRC 15305 / NCIMB 9373 / NCTC 2599 / NRRL B-3711).